Consider the following 586-residue polypeptide: Paxillin (586 aa).

Met1 bears the N-acetylmethionine mark. The short motif at 3-15 (DLDALLADLESTT) is the LD motif 1 element. Positions 13–138 (STTSHISKRP…PSPTVMSSSL (126 aa)) are disordered. The residue at position 31 (Tyr31) is a Phosphotyrosine; by PTK6. Residues 45–54 (VPPPVPPPPS) show a composition bias toward pro residues. Phosphoserine is present on residues Ser83 and Ser85. A compositionally biased stretch (low complexity) spans 86–98 (PIYSSSTKNSSAS). Phosphotyrosine is present on Tyr88. Ser106 bears the Phosphoserine mark. At Tyr118 the chain carries Phosphotyrosine; by PTK6. A phosphoserine mark is found at Ser119, Ser126, and Ser130. A compositionally biased stretch (polar residues) spans 121-137 (PNKQKSAEPSPTVMSSS). The residue at position 132 (Thr132) is a Phosphothreonine. Ser137, Ser140, and Ser143 each carry phosphoserine. An LD motif 2 motif is present at residues 144–156 (ELDRLLLELNAVQ). Phosphotyrosine is present on Tyr210. The disordered stretch occupies residues 220–241 (GGKAGPLMKEKPKRNGGRGLED). Residues 245–257 (SVESLLDELENSV) carry the LD motif 3 motif. Ser259 bears the Phosphoserine mark. The tract at residues 266–290 (VNQGEMSSPQRVTSSQQQTRISASS) is disordered. Ser273 carries the phosphoserine; by CDK5 modification. Phosphoserine occurs at positions 279, 287, 290, 301, 317, 327, and 335. A required for binding to PARVA and ILK region spans residues 291–310 (ATRELDELMASLSDFKFMAQ). The LD motif 4 signature appears at 294-305 (ELDELMASLSDF). The disordered stretch occupies residues 309-329 (AQGKTGSSSPPGGLSKPGSQL). A compositionally biased stretch (low complexity) spans 310-329 (QGKTGSSSPPGGLSKPGSQL). An LD motif 5 motif is present at residues 328–340 (QLDSMLGSLQSDL). LIM zinc-binding domains lie at 353–403 (CGAC…CEKD), 412–462 (CYYC…CRKD), and 471–521 (CGGC…CEVH). At Ser528 the chain carries Phosphoserine. One can recognise an LIM zinc-binding 4 domain in the interval 530–580 (CSGCQKPITGRCITAMAKKFHPEHFVCAFCLKQLNKGTFKEQNDKPYCQSC).

This sequence belongs to the paxillin family. As to quaternary structure, interacts in vitro with VCL/vinculin as well as to the SH3 domain of SRC and, when tyrosine phosphorylated, to the SH2 domain of CRK. Interacts with GIT1. Interacts with NUDT16L1/SDOS. Interacts with PTK2/FAK1. Interacts with PTK2B/PYK2. Interacts with ASAP2. Interacts with unphosphorylated ITGA4. Interacts with RNF5. Interacts with PDCD10. Interacts with NEK3, the interaction is prolactin-dependent. Interacts with PTK6. Interacts with TGFB1I1. Interacts with SORBS1. Interacts with PARVB. Interacts (via LD motif 4) with PARVA/PARVIN. Interacts (via LD motif 4) with ILK. Interacts (via cytoplasmic domain) with CEACAM1; the interaction is phosphotyrosyl-dependent. Interacts with LIMA1; this complex stabilizes actin dynamics. Interacts with CD36 (via C-terminus). Interacts with TRIM15. Interacts with PAK4; PAK4 acts as a scaffold to suppport PAXI phosphorylation at Ser-301. In terms of processing, phosphorylated by MAPK1/ERK2. Phosphorylated on tyrosine residues during integrin-mediated cell adhesion, embryonic development, fibroblast transformation and following stimulation of cells by mitogens. Phosphorylation at Ser-273 by CDK5 reduces its interaction with PTK2/FAK1 in matrix-cell focal adhesions (MCFA) during oligodendrocytes (OLs) differentiation. Phosphorylation at Tyr-31 and Tyr-118 by PTK6 promote the activation of RAC1 via CRK/CrKII, thereby promoting migration and invasion. Phosphorylation at Ser-279 by SLK is required for PXN redistribution and cell motility. Phosphorylation at Ser-301 promotes focal adhesion disassembly during cell migration.

The protein localises to the cytoplasm. It is found in the cytoskeleton. It localises to the cell junction. The protein resides in the focal adhesion. Its subcellular location is the cell cortex. Its function is as follows. Cytoskeletal protein involved in actin-membrane attachment at sites of cell adhesion to the extracellular matrix (focal adhesion). Recruits other proteins such as TRIM15 to focal adhesion. In Rattus norvegicus (Rat), this protein is Paxillin.